Consider the following 429-residue polypeptide: Glucose-1-phosphate adenylyltransferase (429 aa).

Residues glycine 162, 177-178 (EK), and serine 209 each bind alpha-D-glucose 1-phosphate.

Belongs to the bacterial/plant glucose-1-phosphate adenylyltransferase family. In terms of assembly, homotetramer.

It carries out the reaction alpha-D-glucose 1-phosphate + ATP + H(+) = ADP-alpha-D-glucose + diphosphate. It participates in glycan biosynthesis; glycogen biosynthesis. In terms of biological role, involved in the biosynthesis of ADP-glucose, a building block required for the elongation reactions to produce glycogen. Catalyzes the reaction between ATP and alpha-D-glucose 1-phosphate (G1P) to produce pyrophosphate and ADP-Glc. The polypeptide is Glucose-1-phosphate adenylyltransferase (Picosynechococcus sp. (strain ATCC 27264 / PCC 7002 / PR-6) (Agmenellum quadruplicatum)).